The chain runs to 487 residues: MISIDLLDNSGTSMPADTSIKLHEVIKFISKSKKMTVLTGAGISCNAGIPDFRSSDGLYNMVKAKHPKAVVRGQDLFDISLFRDEMSLSVFCTFMESLYKSSLNAKPTETHKFIKILKDKNKLLRCYTQNIDCIEQHINLKLGINLQEFDNNKFKQVWNQLDVVQLHGNLHKLSCTNCFSQFNWNEEFQTLLANGLNPECSKCMDKYQQRLYSGKRLTGQTIGLLRPDIVLYGEHHPQMEILTQGLNSDLKSRPDCLIIMGTSLKVAGVKSLVKSLSKIIHNKGGKVIYVNKTKLSASSWKNYIDYEVVSDCDEFVRMLKTEIPDLFLTQEQLDSEKLNQVAVKGSSLNKPIVKPEAKVKIEPGIKQEDAIQYSPEREVTIKQEVNIKQEPIVKREVESVSVKEEPIPTPPTTPHKPKQATKLKRKSPDEISANEVHSRVKRLRPRNDQLSSPASSINGSEEEEEEDEPVAKVLFENARKGITLDQH.

The region spanning 15 to 336 (PADTSIKLHE…FLTQEQLDSE (322 aa)) is the Deacetylase sirtuin-type domain. NAD(+) contacts are provided by residues 40-59 (GAGI…DGLY) and 129-132 (QNID). The active-site Proton acceptor is H167. Residues C175, C178, C200, and C203 each contribute to the Zn(2+) site. Residues 261-263 (GTS), 291-293 (NKT), and C312 each bind NAD(+). Basic and acidic residues predominate over residues 397–406 (VESVSVKEEP). The segment at 397–487 (VESVSVKEEP…ARKGITLDQH (91 aa)) is disordered. A compositionally biased stretch (basic residues) spans 415-425 (HKPKQATKLKR). Positions 448–459 (DQLSSPASSING) are enriched in polar residues.

The protein belongs to the sirtuin family. Class I subfamily. Zn(2+) serves as cofactor.

The protein resides in the cytoplasm. The protein localises to the nucleus. The catalysed reaction is N(6)-acetyl-L-lysyl-[protein] + NAD(+) + H2O = 2''-O-acetyl-ADP-D-ribose + nicotinamide + L-lysyl-[protein]. Functionally, NAD-dependent histone deacetylase, which could function in telomeric silencing, cell cycle progression and chromosome stability. This Candida albicans (strain SC5314 / ATCC MYA-2876) (Yeast) protein is NAD-dependent histone deacetylase HST3 (HST3).